A 325-amino-acid chain; its full sequence is MKIFDYEDVQLIPNKCIVKSRSECDTSVQFGPKRFKLPVVPANMQTVMNEKLAEWFAENDYFYIMHRFDEEGRIPFIKKMQDKGLFASISVGVKDKEYDFVRELAEEGLKPEYITIDIAHGHSEQVINMIRQIKSYLPETFVIAGNVGTPEGVRELENAGADATKVGIGPGRVCITKIKTGFGTGGWQLAAINHCSKAARKPMIADGGIRTHGDIAKSIRFGASMVMVGSLFAAHEESPGETVELDGKLYKEYFGSASEFQKGEHKNVEGKKMFVEHKGTLADTLTEMQQDLQSSISYAGGKDLDSLRKVDYVIVRNSIFNGDRD.

C174 acts as the Thioimidate intermediate in catalysis. 203–226 is a binding site for NADP(+); that stretch reads MIADGGIRTHGDIAKSIRFGASMV.

The protein belongs to the IMPDH/GMPR family. GuaC type 2 subfamily.

It carries out the reaction IMP + NH4(+) + NADP(+) = GMP + NADPH + 2 H(+). Catalyzes the irreversible NADPH-dependent deamination of GMP to IMP. It functions in the conversion of nucleobase, nucleoside and nucleotide derivatives of G to A nucleotides, and in maintaining the intracellular balance of A and G nucleotides. This chain is GMP reductase, found in Staphylococcus carnosus (strain TM300).